A 323-amino-acid chain; its full sequence is Arginase-1 (323 aa).

The tract at residues 1-27 is disordered; it reads MSSKPKSLEIIGAPFSKGQPRGGVEKG. Phosphoserine is present on S7. K17 is subject to N6-succinyllysine. 2 positions are modified to phosphoserine: S62 and S72. An N6-succinyllysine modification is found at K75. Positions 101, 124, 126, and 128 each coordinate Mn(2+). Substrate contacts are provided by residues 126 to 130 and 137 to 139; these read HTDIN and SGN. S163 carries the phosphoserine modification. A substrate-binding site is contributed by D183. The residue at position 217 (S217) is a Phosphoserine. Positions 232 and 234 each coordinate Mn(2+). T246 and E277 together coordinate substrate. T281 bears the Phosphothreonine mark.

This sequence belongs to the arginase family. Homotrimer. Interacts with CMTM6. It depends on Mn(2+) as a cofactor. As to expression, expressed in macrophages. Expressed in precursor and mature group 2 innate lymphoid cells (ILC2s). Expressed in lung tumor-associated myeloid cells. Expressed in lung tumor-infiltrating dendritic cells.

It localises to the cytoplasm. It is found in the cytoplasmic granule. The catalysed reaction is L-arginine + H2O = urea + L-ornithine. Its pathway is nitrogen metabolism; urea cycle; L-ornithine and urea from L-arginine: step 1/1. In terms of biological role, key element of the urea cycle converting L-arginine to urea and L-ornithine, which is further metabolized into metabolites proline and polyamides that drive collagen synthesis and bioenergetic pathways critical for cell proliferation, respectively; the urea cycle takes place primarily in the liver and, to a lesser extent, in the kidneys. Its function is as follows. Functions in L-arginine homeostasis in nonhepatic tissues characterized by the competition between nitric oxide synthase (NOS) and arginase for the available intracellular substrate arginine. Arginine metabolism is a critical regulator of innate and adaptive immune responses. Involved in an antimicrobial effector pathway in polymorphonuclear granulocytes (PMN). Upon PMN cell death is liberated from the phagolysosome and depletes arginine in the microenvironment leading to suppressed T cell and natural killer (NK) cell proliferation and cytokine secretion. In group 2 innate lymphoid cells (ILC2s) promotes acute type 2 inflammation in the lung and is involved in optimal ILC2 proliferation but not survival. Plays a role in the immune response of alternatively activated or M2 macrophages in processes such as wound healing and tissue regeneration, immune defense against multicellular pathogens and parasites, and immune suppression and allergic inflammation; the regulatory outcome seems to be organ specific. In tumor-infiltrating dendritic cells (DCs) and myeloid-derived suppressor cells (MDSCs) plays a role in suppression of T cell-mediated antitumor immunity. The protein is Arginase-1 (Arg1) of Mus musculus (Mouse).